A 462-amino-acid polypeptide reads, in one-letter code: Glycine--tRNA ligase (462 aa).

The substrate site is built by R98 and E174. ATP is bound by residues 206–208, 216–221, 290–291, and 334–337; these read RNE, FRTREF, EL, and GADR. 221 to 225 is a binding site for substrate; sequence FEQME. 330-334 is a binding site for substrate; sequence EPSLG.

The protein belongs to the class-II aminoacyl-tRNA synthetase family. As to quaternary structure, homodimer.

Its subcellular location is the cytoplasm. The catalysed reaction is tRNA(Gly) + glycine + ATP = glycyl-tRNA(Gly) + AMP + diphosphate. In terms of biological role, catalyzes the attachment of glycine to tRNA(Gly). The sequence is that of Glycine--tRNA ligase from Lachnospira eligens (strain ATCC 27750 / DSM 3376 / VPI C15-48 / C15-B4) (Eubacterium eligens).